Consider the following 535-residue polypeptide: Aklavinone 12-hydroxylase RdmE (535 aa).

FAD contacts are provided by Leu-15, Gly-16, Glu-35, Gln-119, and Leu-143. Tyr-224 functions as the Proton acceptor in the catalytic mechanism. Asp-308 contacts FAD. Residue Gly-317 participates in aklavinone binding.

This sequence belongs to the PheA/TfdB FAD monooxygenase family. Monomer. FAD is required as a cofactor.

The enzyme catalyses aklavinone + NADPH + O2 + H(+) = epsilon-rhodomycinone + NADP(+) + H2O. Its pathway is antibiotic biosynthesis; daunorubicin biosynthesis. It participates in antibiotic biosynthesis; carminomycin biosynthesis. It functions in the pathway antibiotic biosynthesis; rhodomycin biosynthesis. Inhibited by phenylglyoxal and 2,3-butanedione. NADP provides a partial protection against inhibition by phenylglyoxal. Increasing the methanol concentration in the assay causes inhibition of the enzyme. Its function is as follows. Involved in the biosynthesis of the anthracyclines carminomycin, rhodomycin and daunorubicin (daunomycin) which are aromatic polyketide antibiotics that exhibit high cytotoxicity and are widely applied in the chemotherapy of a variety of cancers. Catalyzes the incorporation of a hydroxyl group at position C-11 of aklavinone, resulting in epsilon-rhodomycinone. It cannot accept substrates glycosylated at position C-7 and is specific for the C-9R configuration of anthracyclines. It can use both NAD or NADP but it is slowly inactivated in the presence of NADH. This is Aklavinone 12-hydroxylase RdmE (rdmE) from Streptomyces purpurascens.